We begin with the raw amino-acid sequence, 34 residues long: Mytilin-B (34 aa).

Intrachain disulfides connect C2-C27, C6-C29, C10-C31, and C15-C34.

Its subcellular location is the secreted. In terms of biological role, has antibacterial and antiviral activity. This chain is Mytilin-B, found in Mytilus edulis (Blue mussel).